We begin with the raw amino-acid sequence, 264 residues long: Secretory carrier-associated membrane protein 4 (264 aa).

Residues 1-33 are disordered; it reads MNRHHDPNPFDEDEEIVNPFSKGGGRVPAASRP. Residues 1 to 122 lie on the Cytoplasmic side of the membrane; that stretch reads MNRHHDPNPF…AQKLQYLAFA (122 aa). Residues 51 to 85 adopt a coiled-coil conformation; that stretch reads MNDSSQKQRKLADWEAELRKKEMDIKRREEAIAKF. 4 helical membrane passes run 123-143, 150-170, 185-205, and 233-253; these read SWLG…VCWI, IFFL…VLWY, FGWF…AAIA, and IFYF…LWVL. Topologically, residues 254 to 264 are cytoplasmic; it reads QKIYLYFRGNK.

Belongs to the SCAMP family.

It localises to the cell membrane. The protein resides in the cytoplasmic vesicle. Its subcellular location is the secretory vesicle membrane. Its function is as follows. Probably involved in membrane trafficking. The chain is Secretory carrier-associated membrane protein 4 (SCAMP4) from Arabidopsis thaliana (Mouse-ear cress).